Here is a 496-residue protein sequence, read N- to C-terminus: MLO-like protein 15 (496 aa).

Residues 1-9 are Extracellular-facing; it reads MAGGGTTLE. The helical transmembrane segment at 10-30 threads the bilayer; the sequence is YTPTWVVALVCSVIVSISFAV. The Cytoplasmic segment spans residues 31-59; it reads ERLIHRAGKHFKNNDQKQLFGALQKIKEE. A helical membrane pass occupies residues 60–80; it reads LMLVGFISLLLSVGQSKIAKI. Over 81–147 the chain is Extracellular; that stretch reads CISKELSEKF…MSLSALHELH (67 aa). The chain crosses the membrane as a helical span at residues 148-168; it reads IFIFVLAVAHIIFCLLTIVFG. The Cytoplasmic portion of the chain corresponds to 169–269; it reads TMKIKQWKKW…KYLMRALNSD (101 aa). A helical transmembrane segment spans residues 270-290; the sequence is FKKVVGISWYLWVFVVLFLLL. Residue Asn-291 is a topological domain, extracellular. Residues 292–312 form a helical membrane-spanning segment; sequence IVAWHVYFWLAFIPLILLLAV. Residues 313–355 are Cytoplasmic-facing; it reads GTKLEHIITDLAHEVAEKHIAVEGDLVVRPSDDLFWFQSPRLV. A helical transmembrane segment spans residues 356 to 376; the sequence is LFLIHFILFQNSFEIAYFFFI. The Extracellular portion of the chain corresponds to 377–397; that stretch reads LFQFGWDSCIMDHVKFVIPRL. A helical membrane pass occupies residues 398–418; the sequence is VIGVIIQLLCSYSTLPLYALV. The Cytoplasmic segment spans residues 419 to 496; it reads TQMGSSFKGA…KEKSEIAHHD (78 aa). Residues 432–453 are calmodulin-binding; sequence EQTQEHLVGWAKMAKRGVKKGA. The interval 454-496 is disordered; that stretch reads TQVGTSHDATSPRPSIQLNSLLGKGSSQQNQNPKEKSEIAHHD. Positions 455-485 are enriched in polar residues; sequence QVGTSHDATSPRPSIQLNSLLGKGSSQQNQN. Positions 486–496 are enriched in basic and acidic residues; the sequence is PKEKSEIAHHD.

Belongs to the MLO family.

The protein localises to the membrane. In terms of biological role, may be involved in modulation of pathogen defense and leaf cell death. Activity seems to be regulated by Ca(2+)-dependent calmodulin binding and seems not to require heterotrimeric G proteins. The chain is MLO-like protein 15 (MLO15) from Arabidopsis thaliana (Mouse-ear cress).